The sequence spans 1470 residues: Histone acetyltransferase HAC4 (1470 aa).

A compositionally biased stretch (polar residues) spans 1 to 10 (MNNNKEVPQN). Disordered regions lie at residues 1–20 (MNNN…SSSA) and 342–376 (TNFQ…HSQN). Residues 11–20 (SVAVSSSSSA) are compositionally biased toward low complexity. Positions 342-365 (TNFQSAPNNRDNLPQVSQQLSNHG) are enriched in polar residues. The segment at 416 to 495 (GQTSSNTVLR…SISCRTCVAV (80 aa)) adopts a TAZ-type 1 zinc-finger fold. A disordered region spans residues 518-566 (SSKCQPKKSSKSRQAYKKGGAEAPSVDADLQRSIKRPKLHRPSQNITPE). Over residues 522–533 (QPKKSSKSRQAY) the composition is skewed to basic residues. The PHD-type zinc-finger motif lies at 764–841 (HYVCAPCYNE…KYTCPSCYIQ (78 aa)). One can recognise a CBP/p300-type HAT domain in the interval 856–1293 (VPGATSLPVT…ILYHLHNPTA (438 aa)). Acetyl-CoA-binding positions include 979-981 (LDS), 998-999 (RT), and Trp-1054. 2 consecutive ZZ-type zinc fingers follow at residues 1175–1238 (HLQH…IKDV) and 1295–1347 (AFAT…SSTD). Zn(2+) contacts are provided by Cys-1180, Cys-1183, Cys-1195, Cys-1198, Cys-1204, Cys-1207, His-1220, His-1228, Cys-1300, Cys-1303, Cys-1315, Cys-1318, Cys-1324, Cys-1327, His-1335, and His-1337. The TAZ-type 2 zinc finger occupies 1358 to 1436 (SQSYQVKLEK…KCTVPKCSGL (79 aa)).

Rosette leaves, stems and flowers.

It localises to the nucleus. It carries out the reaction L-lysyl-[protein] + acetyl-CoA = N(6)-acetyl-L-lysyl-[protein] + CoA + H(+). Its function is as follows. Acetyltransferase enzyme. Acetylates histones, giving a specific tag for transcriptional activation. The sequence is that of Histone acetyltransferase HAC4 (HAC4) from Arabidopsis thaliana (Mouse-ear cress).